A 255-amino-acid polypeptide reads, in one-letter code: Hydroxyacylglutathione hydrolase (255 aa).

The Zn(2+) site is built by H55, H57, D59, H60, H111, D131, and H169.

It belongs to the metallo-beta-lactamase superfamily. Glyoxalase II family. In terms of assembly, monomer. Requires Zn(2+) as cofactor.

It carries out the reaction an S-(2-hydroxyacyl)glutathione + H2O = a 2-hydroxy carboxylate + glutathione + H(+). It participates in secondary metabolite metabolism; methylglyoxal degradation; (R)-lactate from methylglyoxal: step 2/2. Thiolesterase that catalyzes the hydrolysis of S-D-lactoyl-glutathione to form glutathione and D-lactic acid. The polypeptide is Hydroxyacylglutathione hydrolase (Chromohalobacter salexigens (strain ATCC BAA-138 / DSM 3043 / CIP 106854 / NCIMB 13768 / 1H11)).